The sequence spans 400 residues: Subtilisin-like protease 11 (400 aa).

The first 19 residues, 1–19 (MGLFKVIFTAVAALSAVDA), serve as a signal peptide directing secretion. Residues 20–117 (AELLSSAKSK…VEHDRHVYIS (98 aa)) constitute a propeptide that is removed on maturation. The 82-residue stretch at 35 to 116 (SYLVVMKDSV…FVEHDRHVYI (82 aa)) folds into the Inhibitor I9 domain. Residues 127–400 (SWGLGRVSHR…NKLLYNGSGK (274 aa)) form the Peptidase S8 domain. N-linked (GlcNAc...) asparagine glycosylation is present at Asn138. Asp159 acts as the Charge relay system in catalysis. Asn181 carries an N-linked (GlcNAc...) asparagine glycan. Catalysis depends on His191, which acts as the Charge relay system. 2 N-linked (GlcNAc...) asparagine glycosylation sites follow: Asn252 and Asn337. The active-site Charge relay system is the Ser346. N-linked (GlcNAc...) asparagine glycans are attached at residues Asn388 and Asn396.

Belongs to the peptidase S8 family.

It is found in the secreted. Its function is as follows. Secreted subtilisin-like serine protease with keratinolytic activity that contributes to pathogenicity. This is Subtilisin-like protease 11 (SUB11) from Arthroderma benhamiae (strain ATCC MYA-4681 / CBS 112371) (Trichophyton mentagrophytes).